A 127-amino-acid polypeptide reads, in one-letter code: Aspartate 1-decarboxylase (127 aa).

Serine 25 (schiff-base intermediate with substrate; via pyruvic acid) is an active-site residue. Serine 25 carries the post-translational modification Pyruvic acid (Ser). Threonine 57 lines the substrate pocket. Tyrosine 58 functions as the Proton donor in the catalytic mechanism. 73–75 is a substrate binding site; sequence GAA.

Belongs to the PanD family. In terms of assembly, heterooctamer of four alpha and four beta subunits. Requires pyruvate as cofactor. In terms of processing, is synthesized initially as an inactive proenzyme, which is activated by self-cleavage at a specific serine bond to produce a beta-subunit with a hydroxyl group at its C-terminus and an alpha-subunit with a pyruvoyl group at its N-terminus.

The protein resides in the cytoplasm. The catalysed reaction is L-aspartate + H(+) = beta-alanine + CO2. It participates in cofactor biosynthesis; (R)-pantothenate biosynthesis; beta-alanine from L-aspartate: step 1/1. Its function is as follows. Catalyzes the pyruvoyl-dependent decarboxylation of aspartate to produce beta-alanine. This is Aspartate 1-decarboxylase from Bacillus cereus (strain 03BB102).